The sequence spans 253 residues: uncharacterized protein (253 aa).

8 residues coordinate NADP(+): Ile17, Ser36, Asp62, Asn89, Tyr158, Lys162, Val191, and Thr193. The active-site Proton donor is the Tyr158. Lys162 acts as the Lowers pKa of active site Tyr in catalysis.

It belongs to the short-chain dehydrogenases/reductases (SDR) family.

It localises to the cytoplasm. It is found in the nucleus. This is an uncharacterized protein from Schizosaccharomyces pombe (strain 972 / ATCC 24843) (Fission yeast).